Here is a 292-residue protein sequence, read N- to C-terminus: Pyridoxal 5'-phosphate synthase subunit PdxS (292 aa).

Aspartate 22 provides a ligand contact to D-ribose 5-phosphate. Lysine 79 functions as the Schiff-base intermediate with D-ribose 5-phosphate in the catalytic mechanism. Glycine 151 is a binding site for D-ribose 5-phosphate. A D-glyceraldehyde 3-phosphate-binding site is contributed by arginine 163. D-ribose 5-phosphate contacts are provided by residues glycine 212 and 233–234 (GS).

Belongs to the PdxS/SNZ family. In terms of assembly, in the presence of PdxT, forms a dodecamer of heterodimers.

The catalysed reaction is aldehydo-D-ribose 5-phosphate + D-glyceraldehyde 3-phosphate + L-glutamine = pyridoxal 5'-phosphate + L-glutamate + phosphate + 3 H2O + H(+). It participates in cofactor biosynthesis; pyridoxal 5'-phosphate biosynthesis. In terms of biological role, catalyzes the formation of pyridoxal 5'-phosphate from ribose 5-phosphate (RBP), glyceraldehyde 3-phosphate (G3P) and ammonia. The ammonia is provided by the PdxT subunit. Can also use ribulose 5-phosphate and dihydroxyacetone phosphate as substrates, resulting from enzyme-catalyzed isomerization of RBP and G3P, respectively. This Ruminiclostridium cellulolyticum (strain ATCC 35319 / DSM 5812 / JCM 6584 / H10) (Clostridium cellulolyticum) protein is Pyridoxal 5'-phosphate synthase subunit PdxS.